The chain runs to 631 residues: Chaperone protein DnaK (631 aa).

Position 197 is a phosphothreonine; by autocatalysis (Thr197). The segment at 598–631 (MYKKEQGQTGGTEQGGTEQKKSGGDDDVIDAEVE) is disordered. The span at 622-631 (DDDVIDAEVE) shows a compositional bias: acidic residues.

Belongs to the heat shock protein 70 family.

Its function is as follows. Acts as a chaperone. The chain is Chaperone protein DnaK from Nitratiruptor sp. (strain SB155-2).